A 232-amino-acid polypeptide reads, in one-letter code: Small ribosomal subunit protein uS3 (232 aa).

The 69-residue stretch at Ile39–Arg107 folds into the KH type-2 domain. The segment covering Gln213–Pro222 has biased composition (basic and acidic residues). Residues Gln213–Lys232 form a disordered region. Residues Lys223–Lys232 show a composition bias toward basic residues.

The protein belongs to the universal ribosomal protein uS3 family. In terms of assembly, part of the 30S ribosomal subunit. Forms a tight complex with proteins S10 and S14.

In terms of biological role, binds the lower part of the 30S subunit head. Binds mRNA in the 70S ribosome, positioning it for translation. The polypeptide is Small ribosomal subunit protein uS3 (Campylobacter fetus subsp. fetus (strain 82-40)).